The following is a 402-amino-acid chain: Sensor protein kinase FleS (402 aa).

The region spanning 188 to 393 (SLAHQIRTPL…CATLILPLIP (206 aa)) is the Histidine kinase domain. Phosphohistidine; by autocatalysis is present on histidine 191.

The catalysed reaction is ATP + protein L-histidine = ADP + protein N-phospho-L-histidine.. Functionally, member of the two-component regulatory system FleS/FleR that regulates the expression of multiple genes involved in flagellar synthesis, adhesion, swarming, motility and antibiotic resistance. May function as a membrane-associated protein kinase that phosphorylates FleR in response to environmental signals leading to activation of specific gene promoters. The polypeptide is Sensor protein kinase FleS (fleS) (Pseudomonas aeruginosa (strain ATCC 15692 / DSM 22644 / CIP 104116 / JCM 14847 / LMG 12228 / 1C / PRS 101 / PAO1)).